The chain runs to 280 residues: DegV domain-containing protein SPy_1698/M5005_Spy1391 (280 aa).

The DegV domain maps to 3-280 (WKIVTDSGCD…DGGLLMGYEI (278 aa)). Hexadecanoate is bound by residues S63 and S91.

May bind long-chain fatty acids, such as palmitate, and may play a role in lipid transport or fatty acid metabolism. The polypeptide is DegV domain-containing protein SPy_1698/M5005_Spy1391 (Streptococcus pyogenes serotype M1).